A 235-amino-acid chain; its full sequence is Octanoyltransferase (235 aa).

The BPL/LPL catalytic domain occupies 28–203; sequence GRAEETLLLL…PFAGLPADAL (176 aa). Substrate-binding positions include 66-73, 133-135, and 146-148; these read RGGDVTWH, SIG, and GFA. Cysteine 164 acts as the Acyl-thioester intermediate in catalysis. Residues 202-235 form a disordered region; that stretch reads ALPEQPRDAVQPSSCDDVHAPSTTSRRPPCPLTV.

This sequence belongs to the LipB family.

It is found in the cytoplasm. The enzyme catalyses octanoyl-[ACP] + L-lysyl-[protein] = N(6)-octanoyl-L-lysyl-[protein] + holo-[ACP] + H(+). It functions in the pathway protein modification; protein lipoylation via endogenous pathway; protein N(6)-(lipoyl)lysine from octanoyl-[acyl-carrier-protein]: step 1/2. Functionally, catalyzes the transfer of endogenously produced octanoic acid from octanoyl-acyl-carrier-protein onto the lipoyl domains of lipoate-dependent enzymes. Lipoyl-ACP can also act as a substrate although octanoyl-ACP is likely to be the physiological substrate. The sequence is that of Octanoyltransferase from Geobacter sulfurreducens (strain ATCC 51573 / DSM 12127 / PCA).